A 333-amino-acid chain; its full sequence is DNA-directed RNA polymerase subunit alpha (333 aa).

The tract at residues 1–251 (MEKLTKIKHR…AHFQTIGDLT (251 aa)) is alpha N-terminal domain (alpha-NTD). Positions 272–333 (DMEIRLLNLS…KLNEYGKLKN (62 aa)) are alpha C-terminal domain (alpha-CTD).

It belongs to the RNA polymerase alpha chain family. As to quaternary structure, homodimer. The RNAP catalytic core consists of 2 alpha, 1 beta, 1 beta' and 1 omega subunit. When a sigma factor is associated with the core the holoenzyme is formed, which can initiate transcription.

It carries out the reaction RNA(n) + a ribonucleoside 5'-triphosphate = RNA(n+1) + diphosphate. In terms of biological role, DNA-dependent RNA polymerase catalyzes the transcription of DNA into RNA using the four ribonucleoside triphosphates as substrates. In Mycoplasmopsis synoviae (strain 53) (Mycoplasma synoviae), this protein is DNA-directed RNA polymerase subunit alpha.